A 319-amino-acid chain; its full sequence is Protein StrN (319 aa).

Its pathway is antibiotic biosynthesis; streptomycin biosynthesis. This is Protein StrN (strN) from Streptomyces griseus.